Here is a 37-residue protein sequence, read N- to C-terminus: Mu-agatoxin-Aa1f (37 aa).

4 disulfides stabilise this stretch: cysteine 2–cysteine 18, cysteine 9–cysteine 23, cysteine 17–cysteine 33, and cysteine 25–cysteine 31. Asparagine 37 carries the asparagine amide modification.

Belongs to the neurotoxin 07 (Beta/delta-agtx) family. 03 (aga-4) subfamily. Aga sub-subfamily. In terms of tissue distribution, expressed by the venom gland.

The protein localises to the secreted. Insecticidal neurotoxin that induces an irreversible spastic paralysis when injected into insects. Modifies presynaptic voltage-gated sodium channels (Nav), causing them to open at the normal resting potential of the nerve. This leads to spontaneous release of neurotransmitter and repetitive action potentials in motor neurons. The sequence is that of Mu-agatoxin-Aa1f from Agelenopsis aperta (North American funnel-web spider).